We begin with the raw amino-acid sequence, 75 residues long: Endogenous retrovirus group K member 10 Np9 protein (75 aa).

Residues 21–43 (PTAPKRQRPSRTGHDDDGGFVEK) are disordered. The span at 32-43 (TGHDDDGGFVEK) shows a compositional bias: basic and acidic residues.

It localises to the nucleus. In terms of biological role, may possess a function in tumorigenesis. The polypeptide is Endogenous retrovirus group K member 10 Np9 protein (ERVK-10) (Homo sapiens (Human)).